The primary structure comprises 140 residues: Nucleoside diphosphate kinase (140 aa).

ATP-binding residues include lysine 11, phenylalanine 59, arginine 87, threonine 93, arginine 104, and asparagine 114. Histidine 117 serves as the catalytic Pros-phosphohistidine intermediate.

This sequence belongs to the NDK family. As to quaternary structure, homotetramer. Requires Mg(2+) as cofactor.

It localises to the cytoplasm. The enzyme catalyses a 2'-deoxyribonucleoside 5'-diphosphate + ATP = a 2'-deoxyribonucleoside 5'-triphosphate + ADP. It carries out the reaction a ribonucleoside 5'-diphosphate + ATP = a ribonucleoside 5'-triphosphate + ADP. Functionally, major role in the synthesis of nucleoside triphosphates other than ATP. The ATP gamma phosphate is transferred to the NDP beta phosphate via a ping-pong mechanism, using a phosphorylated active-site intermediate. This Methylorubrum populi (strain ATCC BAA-705 / NCIMB 13946 / BJ001) (Methylobacterium populi) protein is Nucleoside diphosphate kinase.